The primary structure comprises 120 residues: Ribosome-binding factor A (120 aa).

The protein belongs to the RbfA family. As to quaternary structure, monomer. Binds 30S ribosomal subunits, but not 50S ribosomal subunits or 70S ribosomes.

The protein localises to the cytoplasm. One of several proteins that assist in the late maturation steps of the functional core of the 30S ribosomal subunit. Associates with free 30S ribosomal subunits (but not with 30S subunits that are part of 70S ribosomes or polysomes). Required for efficient processing of 16S rRNA. May interact with the 5'-terminal helix region of 16S rRNA. This is Ribosome-binding factor A from Fusobacterium nucleatum subsp. nucleatum (strain ATCC 25586 / DSM 15643 / BCRC 10681 / CIP 101130 / JCM 8532 / KCTC 2640 / LMG 13131 / VPI 4355).